Reading from the N-terminus, the 461-residue chain is Integrator complex subunit 12 (461 aa).

Residues 42–131 are disordered; the sequence is GIDSSYRPTQ…PETRSSPITV (90 aa). A Glycyl lysine isopeptide (Lys-Gly) (interchain with G-Cter in SUMO2) cross-link involves residue lysine 68. Residues 88–124 show a composition bias toward basic and acidic residues; that stretch reads TAEKIKKEAEKRPADKMKDVTEGIDVPKKPRLEKPET. Serine 127 bears the Phosphoserine mark. A PHD-type zinc finger spans residues 158–214; that stretch reads GLACVVCRQMTVASGNQLVECQECHNLYHQDCHKPQVTDKEVNDPRLVWYCARCTRQ. Lysine 253 is covalently cross-linked (Glycyl lysine isopeptide (Lys-Gly) (interchain with G-Cter in SUMO2)). Over residues 302 to 328 the composition is skewed to polar residues; sequence AGPSTAKLNSAAQNSSGKPAASSSNQK. The segment at 302 to 443 is disordered; it reads AGPSTAKLNS…PTSQESQLNA (142 aa). Low complexity-rich tracts occupy residues 348–357 and 381–436; these read GSGNSTSPSV and VSKV…GPTS.

Belongs to the Integrator subunit 12 family. In terms of assembly, component of the Integrator complex, composed of core subunits INTS1, INTS2, INTS3, INTS4, INTS5, INTS6, INTS7, INTS8, INTS9/RC74, INTS10, INTS11/CPSF3L, INTS12, INTS13, INTS14 and INTS15. The core complex associates with protein phosphatase 2A subunits PPP2CA and PPP2R1A, to form the Integrator-PP2A (INTAC) complex. In terms of processing, dephosphorylated at Ser-127 by the PNUTS-PP1 complex, promoting RNA polymerase II transcription pause-release.

Its subcellular location is the nucleus. In terms of biological role, component of the integrator complex, a multiprotein complex that terminates RNA polymerase II (Pol II) transcription in the promoter-proximal region of genes. The integrator complex provides a quality checkpoint during transcription elongation by driving premature transcription termination of transcripts that are unfavorably configured for transcriptional elongation: the complex terminates transcription by (1) catalyzing dephosphorylation of the C-terminal domain (CTD) of Pol II subunit POLR2A/RPB1 and SUPT5H/SPT5, (2) degrading the exiting nascent RNA transcript via endonuclease activity and (3) promoting the release of Pol II from bound DNA. The integrator complex is also involved in terminating the synthesis of non-coding Pol II transcripts, such as enhancer RNAs (eRNAs), small nuclear RNAs (snRNAs), telomerase RNAs and long non-coding RNAs (lncRNAs). Mediates recruitment of cytoplasmic dynein to the nuclear envelope, probably as component of the integrator complex. This is Integrator complex subunit 12 (Ints12) from Mus musculus (Mouse).